The sequence spans 83 residues: Small ribosomal subunit protein bS20 (83 aa).

It belongs to the bacterial ribosomal protein bS20 family.

Binds directly to 16S ribosomal RNA. The polypeptide is Small ribosomal subunit protein bS20 (Staphylococcus haemolyticus (strain JCSC1435)).